Consider the following 29-residue polypeptide: Cytolysin Uc-1 (29 aa).

Polar residues predominate over residues 1-15; the sequence is DEQTGSKGPNENLPS. The tract at residues 1-29 is disordered; it reads DEQTGSKGPNENLPSQKDLXAKASXLTEV.

The protein resides in the secreted. Its subcellular location is the nematocyst. The protein localises to the target cell membrane. Functionally, pore-forming toxin that lyses bovine erythrocytes at nanomolar concentrations. Is devoid of enzymatic activity. Binds to monolayers and efficiently permeabilizes small lipid vesicles composed of sphingomyelin and cholesterol. The cytolytic activity is not prevented by cholesterol or sphingomyelin. The protein is Cytolysin Uc-1 of Urticina crassicornis (Mottled anemone).